Consider the following 244-residue polypeptide: EKC/KEOPS complex subunit Tp53rkb (244 aa).

The region spanning Leu24–Gly244 is the Protein kinase domain. At Ser25 the chain carries Phosphoserine. ATP is bound by residues Val30–Val38 and Lys51. The Nuclear localization signal motif lies at Arg69–Gly86. The active-site Proton acceptor is the Asp153.

It belongs to the protein kinase superfamily. BUD32 family. Component of the EKC/KEOPS complex composed of at least GON7, TP53RK, TPRKB, OSGEP and LAGE3; the whole complex dimerizes.

It is found in the nucleus. It catalyses the reaction L-seryl-[protein] + ATP = O-phospho-L-seryl-[protein] + ADP + H(+). The enzyme catalyses L-threonyl-[protein] + ATP = O-phospho-L-threonyl-[protein] + ADP + H(+). Component of the EKC/KEOPS complex that is required for the formation of a threonylcarbamoyl group on adenosine at position 37 (t(6)A37) in tRNAs that read codons beginning with adenine. The complex is probably involved in the transfer of the threonylcarbamoyl moiety of threonylcarbamoyl-AMP (TC-AMP) to the N6 group of A37. TP53RK has ATPase activity in the context of the EKC/KEOPS complex and likely plays a supporting role to the catalytic subunit OSGEP. Atypical protein kinase that phosphorylates 'Ser-15' of p53/TP53 protein and may therefore participate in its activation. The sequence is that of EKC/KEOPS complex subunit Tp53rkb from Mus musculus (Mouse).